The chain runs to 364 residues: Bifunctional protein Rv2228c (364 aa).

Residues 1–139 enclose the RNase H type-1 domain; it reads MKVVIEADGG…MDAAAQSAAA (139 aa). Residues D8, E49, D73, and D123 each contribute to the Mg(2+) site. The active-site Tele-phosphohistidine intermediate is the H172. E246 (proton donor/acceptor; for phosphatase activity) is an active-site residue.

This sequence in the N-terminal section; belongs to the RNase H family. It in the C-terminal section; belongs to the histidine phosphatase superfamily. As to quaternary structure, the N-terminal domain alone is monomeric in solution but associates in the crystal to form a dimer. It depends on Mg(2+) as a cofactor.

The catalysed reaction is Endonucleolytic cleavage to 5'-phosphomonoester.. It catalyses the reaction adenosylcob(III)alamin 5'-phosphate + H2O = adenosylcob(III)alamin + phosphate. It carries out the reaction alpha-ribazole 5'-phosphate + H2O = alpha-ribazole + phosphate. Its pathway is nucleoside biosynthesis; alpha-ribazole biosynthesis; alpha-ribazole from 5,6-dimethylbenzimidazole: step 2/2. Its function is as follows. Endonuclease that displays both RNase H activity with a hybrid RNA/DNA substrate as well as double-stranded RNase activity. As the only authenticated RNase HI in M.tuberculosis, probably plays an important role in the physiology of this organism, being likely involved in bacterial replication. Catalyzes the hydrolysis of the phospho group from alpha-ribazole 5'-phosphate to form alpha-ribazole. May also catalyze the conversion of adenosylcobalamin 5'-phosphate to adenosylcobalamin (vitamin B12). Has a possible role in B12 recycling, but the primary role of the C-terminal domain of this phosphatase enzyme could be phosphate generation to help bacterial survival within the macrophage, which is a phosphate-deprived environment. The sequence is that of Bifunctional protein Rv2228c from Mycobacterium tuberculosis (strain ATCC 25618 / H37Rv).